The chain runs to 213 residues: Pyridoxine/pyridoxamine 5'-phosphate oxidase (213 aa).

Residues 8–11 (RREY) and K67 each bind substrate. FMN is bound by residues 62 to 67 (RIVLLK), 77 to 78 (FT), R83, K84, and Q106. The substrate site is built by Y124, R128, and S132. FMN is bound by residues 141–142 (QS) and W186. 192 to 194 (RLH) contacts substrate. R196 contacts FMN.

It belongs to the pyridoxamine 5'-phosphate oxidase family. As to quaternary structure, homodimer. The cofactor is FMN.

The enzyme catalyses pyridoxamine 5'-phosphate + O2 + H2O = pyridoxal 5'-phosphate + H2O2 + NH4(+). The catalysed reaction is pyridoxine 5'-phosphate + O2 = pyridoxal 5'-phosphate + H2O2. The protein operates within cofactor metabolism; pyridoxal 5'-phosphate salvage; pyridoxal 5'-phosphate from pyridoxamine 5'-phosphate: step 1/1. It participates in cofactor metabolism; pyridoxal 5'-phosphate salvage; pyridoxal 5'-phosphate from pyridoxine 5'-phosphate: step 1/1. Catalyzes the oxidation of either pyridoxine 5'-phosphate (PNP) or pyridoxamine 5'-phosphate (PMP) into pyridoxal 5'-phosphate (PLP). The protein is Pyridoxine/pyridoxamine 5'-phosphate oxidase of Shewanella woodyi (strain ATCC 51908 / MS32).